Consider the following 246-residue polypeptide: Eukaryotic translation initiation factor 6 (246 aa).

Phosphoserine; by CK1 occurs at positions 174 and 175.

It belongs to the eIF-6 family. As to quaternary structure, monomer. Associates with the 60S ribosomal subunit. Post-translationally, phosphorylation at Ser-174 and Ser-175 promotes nuclear export.

It localises to the cytoplasm. Its subcellular location is the nucleus. The protein resides in the nucleolus. Its function is as follows. Binds to the 60S ribosomal subunit and prevents its association with the 40S ribosomal subunit to form the 80S initiation complex in the cytoplasm. Is also involved in ribosome biogenesis. Associates with pre-60S subunits in the nucleus and is involved in its nuclear export. This chain is Eukaryotic translation initiation factor 6, found in Verticillium alfalfae (strain VaMs.102 / ATCC MYA-4576 / FGSC 10136) (Verticillium wilt of alfalfa).